The following is a 412-amino-acid chain: MISQIDKTELLERFLHYVSFHTQSKPNAKHSPSSVGQMKLAMQLQKELIQLGLENVEVSKYAVVTAFLPANDPNLTKTIGLVAHLDTSPQCSGKNVRPEVIEEYRGGDIALGIGEEFISPVYYSFMQKLVGQTLIVTDGTTLLGADNKAGIAEIMTALSILQKENIPHCNIRVAFTPDEEIGLGIHYFPMEKFSCDWAYTIDGGEVGELEYENFNAATAKVRFFGRNIHTGYAKGKMLNALTLACEFQQVFPVDEVPEKTDGKVGFYHLEDFSGDIEQVELTYLIRDFDEQNFAQRKAFIKNQVEKFNAKKGLKKPIELEIQDSYQNMYDVVKNVPQSIELADRAMKAVGIKPNHKPIRGGTDGAFLASKGLACPNIFTGGYNFHSKHELVSLQGMENTVQVIIEMLKCKDL.

Residue His84 participates in Zn(2+) binding. The active site involves Asp86. Asp146 is a Zn(2+) binding site. The Proton acceptor role is filled by Glu179. Zn(2+)-binding residues include Glu180, Asp202, and His385.

It belongs to the peptidase M20B family. The cofactor is Zn(2+).

It localises to the cytoplasm. The catalysed reaction is Release of the N-terminal residue from a tripeptide.. Its function is as follows. Cleaves the N-terminal amino acid of tripeptides. This Haemophilus influenzae (strain ATCC 51907 / DSM 11121 / KW20 / Rd) protein is Peptidase T.